A 267-amino-acid chain; its full sequence is Undecaprenyl-diphosphatase (267 aa).

8 helical membrane-spanning segments follow: residues 1–21, 39–59, 83–103, 111–131, 149–169, 189–209, 218–238, and 245–265; these read MSYF…FLPI, QGLA…VLYF, AKLA…GFVM, LRSA…LWYV, ALFI…RSGA, FLMS…KLVT, FLLT…HFFL, and GMTP…AFLL.

It belongs to the UppP family.

It localises to the cell inner membrane. It catalyses the reaction di-trans,octa-cis-undecaprenyl diphosphate + H2O = di-trans,octa-cis-undecaprenyl phosphate + phosphate + H(+). In terms of biological role, catalyzes the dephosphorylation of undecaprenyl diphosphate (UPP). Confers resistance to bacitracin. The polypeptide is Undecaprenyl-diphosphatase (Vibrio cholerae serotype O1 (strain ATCC 39315 / El Tor Inaba N16961)).